A 499-amino-acid polypeptide reads, in one-letter code: Cytochrome P450 710A2 (499 aa).

Residues 5-25 (VSIFASLAPYLVSALLLFFLI) form a helical membrane-spanning segment. Residue C439 coordinates heme.

The protein belongs to the cytochrome P450 family. It depends on heme as a cofactor. As to expression, expressed in the vascular tissues of roots, shoots, stems and leaves. Expressed in root tips, carpes, siliques and seeds.

The protein resides in the membrane. The enzyme catalyses 5-dehydroepisterol + NADPH + O2 + H(+) = ergosta-5,7,22,24(28)-tetraen-3beta-ol + NADP(+) + 2 H2O. It functions in the pathway steroid biosynthesis; sterol biosynthesis. In terms of biological role, required to form the C-22 double bond in the sterol side chain. Possesses in vitro C-22 desaturase activity toward 24-epi-campesterol and beta-sitosterol and produces brassicasterol and stigmasterol, respectively. No activity with campesterol. This is Cytochrome P450 710A2 from Arabidopsis thaliana (Mouse-ear cress).